A 232-amino-acid chain; its full sequence is MLTRKQYELLRFINERLKEAGVPPSFDEMKDALDLRSKSGIHRLITALEERGFIRRLPNRARAIEVIKLPELSQAASNRRGFTPSVIEGNLGKVRTSTPALDDGERPVAVPVMGRIAAGTPIEALQTRSHTISVPADMLGNGDHYALEVRGDSMVDAGILDGDMALIQRNETADTGDIVVALIDDEEATLKRFRRRGASIALEPANTAYEVRILPPNRVKIQGKLVGLYRKY.

A DNA-binding region (H-T-H motif) is located at residues 26 to 46; it reads FDEMKDALDLRSKSGIHRLIT. Residues Ser-153 and Lys-191 each act as for autocatalytic cleavage activity in the active site.

This sequence belongs to the peptidase S24 family. In terms of assembly, homodimer.

The catalysed reaction is Hydrolysis of Ala-|-Gly bond in repressor LexA.. Represses a number of genes involved in the response to DNA damage (SOS response), including recA and lexA. In the presence of single-stranded DNA, RecA interacts with LexA causing an autocatalytic cleavage which disrupts the DNA-binding part of LexA, leading to derepression of the SOS regulon and eventually DNA repair. This is LexA repressor from Bradyrhizobium sp. (strain BTAi1 / ATCC BAA-1182).